Reading from the N-terminus, the 776-residue chain is 1,4-alpha-glucan branching enzyme GlgB (776 aa).

The Nucleophile role is filled by Asp-431. Glu-484 serves as the catalytic Proton donor.

This sequence belongs to the glycosyl hydrolase 13 family. GlgB subfamily. As to quaternary structure, monomer.

The catalysed reaction is Transfers a segment of a (1-&gt;4)-alpha-D-glucan chain to a primary hydroxy group in a similar glucan chain.. Its pathway is glycan biosynthesis; glycogen biosynthesis. Catalyzes the formation of the alpha-1,6-glucosidic linkages in glycogen by scission of a 1,4-alpha-linked oligosaccharide from growing alpha-1,4-glucan chains and the subsequent attachment of the oligosaccharide to the alpha-1,6 position. The polypeptide is 1,4-alpha-glucan branching enzyme GlgB (Trichodesmium erythraeum (strain IMS101)).